The chain runs to 248 residues: 3-deoxy-manno-octulosonate cytidylyltransferase (248 aa).

The protein belongs to the KdsB family.

It is found in the cytoplasm. It carries out the reaction 3-deoxy-alpha-D-manno-oct-2-ulosonate + CTP = CMP-3-deoxy-beta-D-manno-octulosonate + diphosphate. It functions in the pathway nucleotide-sugar biosynthesis; CMP-3-deoxy-D-manno-octulosonate biosynthesis; CMP-3-deoxy-D-manno-octulosonate from 3-deoxy-D-manno-octulosonate and CTP: step 1/1. The protein operates within bacterial outer membrane biogenesis; lipopolysaccharide biosynthesis. Its function is as follows. Activates KDO (a required 8-carbon sugar) for incorporation into bacterial lipopolysaccharide in Gram-negative bacteria. The polypeptide is 3-deoxy-manno-octulosonate cytidylyltransferase (Salmonella enteritidis PT4 (strain P125109)).